Reading from the N-terminus, the 99-residue chain is Small ribosomal subunit protein bS20 (99 aa).

Belongs to the bacterial ribosomal protein bS20 family.

In terms of biological role, binds directly to 16S ribosomal RNA. This Prochlorococcus marinus (strain SARG / CCMP1375 / SS120) protein is Small ribosomal subunit protein bS20.